The following is a 230-amino-acid chain: MRLAGPLRIVALIIIMGLTWILVTILLGGPGVGLPRIQQFFTSPENSVTAEPRARKYKCGLPQPCPEEHLSFRIVSGAANVIGPKICLEDKMLMSSVKDNVGRGLNIALVNGVSGELLEARAFDMWAGDVNDLLKFIRPLHEGTLVFVASYDDPATKMNEETRKLFSELGSRNAKDLAFRDSWVFVGAKGVQNKSPFEQHMKNSKHTNKYEGWPEALEMEGCIPRRSIAG.

The N-terminal stretch at 1-33 (MRLAGPLRIVALIIIMGLTWILVTILLGGPGVG) is a signal peptide. Disulfide bonds link cysteine 59–cysteine 87 and cysteine 65–cysteine 222. A GG-type lectin domain is found at 68–226 (EHLSFRIVSG…LEMEGCIPRR (159 aa)).

This sequence belongs to the FAM3 family.

The protein localises to the secreted. The chain is Protein FAM3A (Fam3a) from Mus musculus (Mouse).